The following is a 760-amino-acid chain: NAD(P)H-quinone oxidoreductase subunit 5, chloroplastic (760 aa).

16 helical membrane passes run 9–29, 39–59, 89–109, 125–145, 147–167, 185–205, 221–241, 260–280, 282–302, 329–349, 356–376, 398–418, 429–449, 556–576, 620–640, and 734–754; these read WIISFVTLPVPMLIGMGLLLF, IWAFPSVLLLSIVMVFSTDLF, IDPLTSILLILITTVGILVLV, FVYMSFFNTSMLGLVTSSNLI, IYIFWELVGMCSYLLIGFWFT, GDFGLLLGILGLYWITGSFEF, NEVHFLFVTLCAFLLFSGAIA, TPISALIHAATMVAAGIFLVA, LLPLFVVIPYIMKLIALIGII, LGYTMLALGMGSYRAALFHLI, ALLFLGSGSIIHSMEGIVGYS, IAFLLGTLSLCGIPPLACFWS, YSPIFAIIAFSTAGLTAFYMF, ILFPMLVLVLFTLFIGAIGIP, FSVSIASFGIFIASSLYKPIY, and FYLLLYLFYVLIFLLISSSIF.

Belongs to the complex I subunit 5 family. NDH is composed of at least 16 different subunits, 5 of which are encoded in the nucleus.

Its subcellular location is the plastid. The protein localises to the chloroplast thylakoid membrane. It carries out the reaction a plastoquinone + NADH + (n+1) H(+)(in) = a plastoquinol + NAD(+) + n H(+)(out). The enzyme catalyses a plastoquinone + NADPH + (n+1) H(+)(in) = a plastoquinol + NADP(+) + n H(+)(out). Its function is as follows. NDH shuttles electrons from NAD(P)H:plastoquinone, via FMN and iron-sulfur (Fe-S) centers, to quinones in the photosynthetic chain and possibly in a chloroplast respiratory chain. The immediate electron acceptor for the enzyme in this species is believed to be plastoquinone. Couples the redox reaction to proton translocation, and thus conserves the redox energy in a proton gradient. This is NAD(P)H-quinone oxidoreductase subunit 5, chloroplastic (ndhF) from Populus alba (White poplar).